The primary structure comprises 846 residues: Choline trimethylamine-lyase (846 aa).

The 659-residue stretch at 60–718 (PRHVKLKENF…LLGASANGRR (659 aa)) folds into the PFL domain. C489 (cysteine radical intermediate) is an active-site residue. E491 serves as the catalytic Proton acceptor. One can recognise a Glycine radical domain in the interval 725 to 846 (DGISPTQGAD…IISRTMLHGF (122 aa)). G821 bears the Glycine radical mark.

It belongs to the glycyl radical enzyme (GRE) family. CutC subfamily. In terms of assembly, homodimer. In terms of processing, requires the activating protein CutD to generate the key active site glycyl radical on Gly-821 that is involved in catalysis.

The enzyme catalyses choline = trimethylamine + acetaldehyde. The protein operates within amine and polyamine metabolism; choline degradation. Its function is as follows. Glycine radical enzyme that catalyzes the cleavage of a C-N bond in choline, producing trimethylamine (TMA) and acetaldehyde. Is involved in the anaerobic choline utilization pathway that allows D.alaskensis to grow on choline as a source of carbon and energy. Is strictly specific for choline as substrate. This chain is Choline trimethylamine-lyase, found in Oleidesulfovibrio alaskensis (strain ATCC BAA-1058 / DSM 17464 / G20) (Desulfovibrio alaskensis).